A 132-amino-acid chain; its full sequence is MRAEGADHSMINLSVQQVLSLWAHGTVLRNLTEMWYWIFLWALFSSLFVHGAAGVLMFVMLQRHRQGRVISIIAVSIGFLASVTGAMITSAAVAGIYRVAGKNMAPLEALVWGVGQTVLTLIISFSRILATL.

Over 1 to 37 (MRAEGADHSMINLSVQQVLSLWAHGTVLRNLTEMWYW) the chain is Extracellular. Asn12 is a glycosylation site (N-linked (GlcNAc...) asparagine). The helical transmembrane segment at 38–58 (IFLWALFSSLFVHGAAGVLMF) threads the bilayer. Over 59-68 (VMLQRHRQGR) the chain is Cytoplasmic. The chain crosses the membrane as a helical span at residues 69-89 (VISIIAVSIGFLASVTGAMIT). Topologically, residues 90 to 104 (SAAVAGIYRVAGKNM) are extracellular. Residues 105-125 (APLEALVWGVGQTVLTLIISF) traverse the membrane as a helical segment. At 126-132 (SRILATL) the chain is on the cytoplasmic side.

This sequence belongs to the TMEM170 family. As to quaternary structure, interacts with CTNNB1.

The protein localises to the cell membrane. The polypeptide is Transmembrane protein 170B (Mus musculus (Mouse)).